Reading from the N-terminus, the 286-residue chain is Homoserine kinase (286 aa).

78–88 lines the ATP pocket; it reads PVAHGLGSSSS.

This sequence belongs to the GHMP kinase family. Homoserine kinase subfamily.

It is found in the cytoplasm. The catalysed reaction is L-homoserine + ATP = O-phospho-L-homoserine + ADP + H(+). Its pathway is amino-acid biosynthesis; L-threonine biosynthesis; L-threonine from L-aspartate: step 4/5. Catalyzes the ATP-dependent phosphorylation of L-homoserine to L-homoserine phosphate. The chain is Homoserine kinase from Limosilactobacillus fermentum (strain NBRC 3956 / LMG 18251) (Lactobacillus fermentum).